The primary structure comprises 288 residues: Thymidylate synthase (288 aa).

DUMP is bound at residue Arg21. Residue Asn51 participates in (6R)-5,10-methylene-5,6,7,8-tetrahydrofolate binding. Residue 150–151 (RR) participates in dUMP binding. Cys170 (nucleophile) is an active-site residue. Residues 190–193 (RSGD), Asn201, and 231–233 (HIY) contribute to the dUMP site. Asp193 contributes to the (6R)-5,10-methylene-5,6,7,8-tetrahydrofolate binding site. Residue Ala287 coordinates (6R)-5,10-methylene-5,6,7,8-tetrahydrofolate.

This sequence belongs to the thymidylate synthase family. Bacterial-type ThyA subfamily. In terms of assembly, homodimer.

The protein resides in the cytoplasm. It catalyses the reaction dUMP + (6R)-5,10-methylene-5,6,7,8-tetrahydrofolate = 7,8-dihydrofolate + dTMP. It functions in the pathway pyrimidine metabolism; dTTP biosynthesis. Functionally, catalyzes the reductive methylation of 2'-deoxyuridine-5'-monophosphate (dUMP) to 2'-deoxythymidine-5'-monophosphate (dTMP) while utilizing 5,10-methylenetetrahydrofolate (mTHF) as the methyl donor and reductant in the reaction, yielding dihydrofolate (DHF) as a by-product. This enzymatic reaction provides an intracellular de novo source of dTMP, an essential precursor for DNA biosynthesis. This is Thymidylate synthase from Phytoplasma mali (strain AT).